A 158-amino-acid chain; its full sequence is NAD(P)H-quinone oxidoreductase subunit N (158 aa).

Belongs to the complex I NdhN subunit family. NDH-1 can be composed of about 15 different subunits; different subcomplexes with different compositions have been identified which probably have different functions.

The protein resides in the cellular thylakoid membrane. The catalysed reaction is a plastoquinone + NADH + (n+1) H(+)(in) = a plastoquinol + NAD(+) + n H(+)(out). The enzyme catalyses a plastoquinone + NADPH + (n+1) H(+)(in) = a plastoquinol + NADP(+) + n H(+)(out). In terms of biological role, NDH-1 shuttles electrons from an unknown electron donor, via FMN and iron-sulfur (Fe-S) centers, to quinones in the respiratory and/or the photosynthetic chain. The immediate electron acceptor for the enzyme in this species is believed to be plastoquinone. Couples the redox reaction to proton translocation, and thus conserves the redox energy in a proton gradient. Cyanobacterial NDH-1 also plays a role in inorganic carbon-concentration. The protein is NAD(P)H-quinone oxidoreductase subunit N of Rippkaea orientalis (strain PCC 8801 / RF-1) (Cyanothece sp. (strain PCC 8801)).